The sequence spans 523 residues: ATP synthase subunit beta, mitochondrial (523 aa).

A mitochondrion-targeting transit peptide spans 1-19; it reads MFSRVAKTSFSAVRAAKSQ. ATP is bound at residue 201–208; it reads GGAGVGKT.

The protein belongs to the ATPase alpha/beta chains family. In terms of assembly, F-type ATPases have 2 components, CF(1) - the catalytic core - and CF(0) - the membrane proton channel. CF(1) has five subunits: alpha(3), beta(3), gamma(1), delta(1), epsilon(1). CF(0) has three main subunits: a, b and c.

It is found in the mitochondrion. The protein localises to the mitochondrion inner membrane. The catalysed reaction is ATP + H2O + 4 H(+)(in) = ADP + phosphate + 5 H(+)(out). Functionally, mitochondrial membrane ATP synthase (F(1)F(0) ATP synthase or Complex V) produces ATP from ADP in the presence of a proton gradient across the membrane which is generated by electron transport complexes of the respiratory chain. F-type ATPases consist of two structural domains, F(1) - containing the extramembraneous catalytic core, and F(0) - containing the membrane proton channel, linked together by a central stalk and a peripheral stalk. During catalysis, ATP synthesis in the catalytic domain of F(1) is coupled via a rotary mechanism of the central stalk subunits to proton translocation. Subunits alpha and beta form the catalytic core in F(1). Rotation of the central stalk against the surrounding alpha(3)beta(3) subunits leads to hydrolysis of ATP in three separate catalytic sites on the beta subunits. The polypeptide is ATP synthase subunit beta, mitochondrial (Hemicentrotus pulcherrimus (Sea urchin)).